The primary structure comprises 763 residues: Sphingoid long-chain bases kinase 1 (763 aa).

The disordered stretch occupies residues 34-81; it reads TGGSQQSSPIVFPEKRNKKVKASSRRGEVTNDPQVKPKPDEHRIDIGG. Basic and acidic residues predominate over residues 58–81; it reads RRGEVTNDPQVKPKPDEHRIDIGG. Residues 245 to 384 form the DAGKc domain; sequence KSAPKMLVIL…TDVFAVEWIH (140 aa). Residues 255 to 257 and T287 each bind ATP; that span reads NPR. Position 313-316 (313-316) interacts with substrate; that stretch reads GGDG. The active-site Proton donor/acceptor is the D315. ATP is bound by residues E320, 345-347, and R418; that span reads GSD. Residues 561–603 are disordered; it reads MGLTSVQDPPTRCSWGNTGGQDREDISSTVSDPGPIWDAGPKW. 733–735 contacts ATP; sequence DGE.

As to expression, expressed in roots, stems, leaves and at higher levels in flowers.

Involved in the production of sphingolipid metabolites. Active on sphingosine, phytosphingosine (PHS, 4-hydroxysphinganine), D-erythro-dihydrosphingosine, D-erythro-sphingosine and trans-4, trans-8-sphingadienine, an LCB found exclusively in plants, but not on N-acetyl-dihydrosphingosine (C2-dihydroceramide) and D-threo-dihydrosphingosine. This is Sphingoid long-chain bases kinase 1 (LCBK1) from Arabidopsis thaliana (Mouse-ear cress).